Reading from the N-terminus, the 193-residue chain is Peptidyl-tRNA hydrolase (193 aa).

Y21 contacts tRNA. Residue H26 is the Proton acceptor of the active site. Residues Y72, N74, and N120 each coordinate tRNA.

Belongs to the PTH family. As to quaternary structure, monomer.

The protein resides in the cytoplasm. The enzyme catalyses an N-acyl-L-alpha-aminoacyl-tRNA + H2O = an N-acyl-L-amino acid + a tRNA + H(+). Its function is as follows. Hydrolyzes ribosome-free peptidyl-tRNAs (with 1 or more amino acids incorporated), which drop off the ribosome during protein synthesis, or as a result of ribosome stalling. Catalyzes the release of premature peptidyl moieties from peptidyl-tRNA molecules trapped in stalled 50S ribosomal subunits, and thus maintains levels of free tRNAs and 50S ribosomes. The protein is Peptidyl-tRNA hydrolase of Nocardia farcinica (strain IFM 10152).